A 768-amino-acid chain; its full sequence is DNA replication licensing factor MCM3 homolog 2 (768 aa).

The 208-residue stretch at 290-497 folds into the MCM domain; the sequence is TFDLLGNSLA…IDRQISEHVA (208 aa). ATP is bound at residue 340 to 347; that stretch reads GDPSVAKS. Positions 472 to 475 match the Arginine finger motif; sequence SRFD. A compositionally biased stretch (basic and acidic residues) spans 661–670; sequence EMKQQADHDA. Positions 661-689 are disordered; that stretch reads EMKQQADHDAGATGGTVDGHGSSGNDPMD. The segment covering 672–682 has biased composition (gly residues); that stretch reads ATGGTVDGHGS.

This sequence belongs to the MCM family.

The protein localises to the nucleus. The catalysed reaction is ATP + H2O = ADP + phosphate + H(+). Its function is as follows. Acts as a factor that allows the DNA to undergo a single round of replication per cell cycle. Required for DNA replication and cell proliferation. May act as a component of the MCM complex which is the putative replicative helicase of the replication licensing system in eukaryotic cells. The polypeptide is DNA replication licensing factor MCM3 homolog 2 (ROA2) (Zea mays (Maize)).